We begin with the raw amino-acid sequence, 355 residues long: Gentisate 1,2-dioxygenase (355 aa).

In terms of domain architecture, Cupin type-2 spans 106–174 (MQLLLPGEWA…GNEPVVWLDV (69 aa)).

It belongs to the gentisate 1,2-dioxygenase family.

The catalysed reaction is 2,5-dihydroxybenzoate + O2 = 3-maleylpyruvate + H(+). It participates in aromatic compound metabolism; naphthalene degradation. Catalyzes the oxygen-dependent ring fission of gentisate between the carboxyl and proximal hydroxyl groups at positions 1 and 2 of the aromatic ring to form maleylpyruvate. Can also catalyze oxidation of alkyl- and halogenated gentisates. Exhibits higher affinity for 3-substituted gentisates than for gentisate but has higher activity with gentisate. The sequence is that of Gentisate 1,2-dioxygenase from Ralstonia sp.